The primary structure comprises 220 residues: Glycerol-3-phosphate acyltransferase (220 aa).

6 consecutive transmembrane segments (helical) span residues isoleucine 11 to leucine 31, leucine 70 to phenylalanine 90, leucine 96 to phenylalanine 116, glycine 127 to valine 147, isoleucine 153 to proline 173, and methionine 193 to alanine 213.

Belongs to the PlsY family. As to quaternary structure, probably interacts with PlsX.

It localises to the cell inner membrane. It catalyses the reaction an acyl phosphate + sn-glycerol 3-phosphate = a 1-acyl-sn-glycero-3-phosphate + phosphate. It participates in lipid metabolism; phospholipid metabolism. In terms of biological role, catalyzes the transfer of an acyl group from acyl-phosphate (acyl-PO(4)) to glycerol-3-phosphate (G3P) to form lysophosphatidic acid (LPA). This enzyme utilizes acyl-phosphate as fatty acyl donor, but not acyl-CoA or acyl-ACP. The sequence is that of Glycerol-3-phosphate acyltransferase from Helicobacter pylori (strain ATCC 700392 / 26695) (Campylobacter pylori).